Reading from the N-terminus, the 563-residue chain is Kdo(2)-lipid A phosphoethanolamine 7''-transferase (563 aa).

The Cytoplasmic portion of the chain corresponds to Met1 to Gln9. Residues Gln10–Tyr30 traverse the membrane as a helical segment. Residues Arg31 to Ala48 are Periplasmic-facing. A helical transmembrane segment spans residues Val49–Phe69. Over Gly70 to Ser79 the chain is Cytoplasmic. Residues Leu80–Gly100 form a helical membrane-spanning segment. Topologically, residues Tyr101–Glu117 are periplasmic. The helical transmembrane segment at Val118 to Ile138 threads the bilayer. Residues Trp139–Arg159 lie on the Cytoplasmic side of the membrane. A helical transmembrane segment spans residues Ser160–Ile180. Over Gln181 to Asn563 the chain is Periplasmic.

It belongs to the phosphoethanolamine transferase family. EptB subfamily. Ca(2+) serves as cofactor.

The protein localises to the cell inner membrane. It carries out the reaction alpha-Kdo-(2-&gt;4)-alpha-Kdo-(2-&gt;6)-lipid A (E. coli) + a 1,2-diacyl-sn-glycero-3-phosphoethanolamine = 7-O-[2-aminoethoxy(hydroxy)phosphoryl]-alpha-Kdo-(2-&gt;4)-alpha-Kdo-(2-&gt;6)-lipid A + a 1,2-diacyl-sn-glycerol. It catalyses the reaction alpha-Kdo-(2-&gt;4)-alpha-Kdo-(2-&gt;6)-lipid IVA (E. coli) + a 1,2-diacyl-sn-glycero-3-phosphoethanolamine = 7-O-[2-aminoethoxy(hydroxy)phosphoryl]-alpha-Kdo-(2-&gt;4)-alpha-Kdo-(2-&gt;6)-lipid IVA (E. coli) + a 1,2-diacyl-sn-glycerol. With respect to regulation, inhibited by calcium concentrations higher than 1 mM. Catalyzes the addition of a phosphoethanolamine (pEtN) moiety to the outer 3-deoxy-D-manno-octulosonic acid (Kdo) residue of a Kdo(2)-lipid A. Phosphatidylethanolamines with one unsaturated acyl group function as pEtN donors and the reaction releases diacylglycerol. The chain is Kdo(2)-lipid A phosphoethanolamine 7''-transferase (eptB) from Escherichia coli (strain K12).